A 538-amino-acid polypeptide reads, in one-letter code: ESX-3 secretion system ATPase EccB3 (538 aa).

A compositionally biased stretch (basic and acidic residues) spans 1–16; that stretch reads MTNQQHDHDFDHDRRS. The disordered stretch occupies residues 1–25; sequence MTNQQHDHDFDHDRRSFASRTPVNN. Residues 75–95 traverse the membrane as a helical segment; sequence VLMGVLIVITGLIGSFVFSLI.

Belongs to the EccB family. As to quaternary structure, part of the ESX-3 / type VII secretion system (T7SS), which is composed of cytosolic and membrane components. The ESX-3 membrane complex is composed of EccB3, EccC3, EccD3 and EccE3.

The protein localises to the cell inner membrane. An ATPase. Part of the ESX-3 specialized secretion system, which is important for iron and zinc uptake or homeostasis. This chain is ESX-3 secretion system ATPase EccB3, found in Mycobacterium tuberculosis (strain CDC 1551 / Oshkosh).